The following is a 426-amino-acid chain: SrfA-induced gene K protein (426 aa).

The first 23 residues, 1 to 23 (MKKMKILSFFILSLAIIIGIVYS), serve as a signal peptide directing secretion. N-linked (GlcNAc...) asparagine glycosylation is found at asparagine 64, asparagine 136, asparagine 160, and asparagine 226. 2 Laminin EGF-like domains span residues 325–348 (DNQCQCSVGFSGDDCRQCDNGMVL) and 384–408 (CNGTCTCLPGFSGNDCTLCGNGGEV). 3 disulfide bridges follow: cysteine 330–cysteine 339, cysteine 342–cysteine 358, and cysteine 370–cysteine 388. Asparagine 385 is a glycosylation site (N-linked (GlcNAc...) asparagine).

The protein is SrfA-induced gene K protein (sigK) of Dictyostelium discoideum (Social amoeba).